Here is a 214-residue protein sequence, read N- to C-terminus: MRAELAVYFIAGTQDIVRGTLPSVLEEALKAGITCFQYREKGAGALQTASERKEMALECQQLCAKYQVPFIINDDVALALEIGADGIHVGQNDEEIRQVIASCAGKMKIGLSVHSVSEAEEAERLGSVDYIGVGPIFPTISKADAEPVSGTAILEEIRRAGIKLPIVGIGGINETNSAEVLTAGADGVSVISAITRSEDCQSVIKQLKNPGSPS.

4-amino-2-methyl-5-(diphosphooxymethyl)pyrimidine-binding positions include Gln-37–Lys-41 and Asn-73. Mg(2+) is bound by residues Asp-74 and Asp-93. Ser-112 contributes to the 4-amino-2-methyl-5-(diphosphooxymethyl)pyrimidine binding site. Thr-139–Ser-141 is a binding site for 2-[(2R,5Z)-2-carboxy-4-methylthiazol-5(2H)-ylidene]ethyl phosphate. Lys-142 is a binding site for 4-amino-2-methyl-5-(diphosphooxymethyl)pyrimidine. 2-[(2R,5Z)-2-carboxy-4-methylthiazol-5(2H)-ylidene]ethyl phosphate-binding positions include Gly-171 and Ile-191–Ser-192.

It belongs to the thiamine-phosphate synthase family. The cofactor is Mg(2+).

It catalyses the reaction 2-[(2R,5Z)-2-carboxy-4-methylthiazol-5(2H)-ylidene]ethyl phosphate + 4-amino-2-methyl-5-(diphosphooxymethyl)pyrimidine + 2 H(+) = thiamine phosphate + CO2 + diphosphate. The enzyme catalyses 2-(2-carboxy-4-methylthiazol-5-yl)ethyl phosphate + 4-amino-2-methyl-5-(diphosphooxymethyl)pyrimidine + 2 H(+) = thiamine phosphate + CO2 + diphosphate. It carries out the reaction 4-methyl-5-(2-phosphooxyethyl)-thiazole + 4-amino-2-methyl-5-(diphosphooxymethyl)pyrimidine + H(+) = thiamine phosphate + diphosphate. It functions in the pathway cofactor biosynthesis; thiamine diphosphate biosynthesis; thiamine phosphate from 4-amino-2-methyl-5-diphosphomethylpyrimidine and 4-methyl-5-(2-phosphoethyl)-thiazole: step 1/1. Functionally, condenses 4-methyl-5-(beta-hydroxyethyl)thiazole monophosphate (THZ-P) and 2-methyl-4-amino-5-hydroxymethyl pyrimidine pyrophosphate (HMP-PP) to form thiamine monophosphate (TMP). The protein is Thiamine-phosphate synthase of Listeria innocua serovar 6a (strain ATCC BAA-680 / CLIP 11262).